A 184-amino-acid chain; its full sequence is NEDD8-conjugating enzyme Ubc12 (184 aa).

One can recognise a UBC core domain in the interval 30–175 (AGELRLHKDI…VRRAMTGGYV (146 aa)). Catalysis depends on cysteine 113, which acts as the Glycyl thioester intermediate.

This sequence belongs to the ubiquitin-conjugating enzyme family. UBC12 subfamily. In terms of assembly, interacts with RBX1. As to expression, expressed in shoot, root and floral meristems, and in vascular tissues of leaves.

Its pathway is protein modification; protein neddylation. In terms of biological role, accepts the ubiquitin-like protein NEDD8/RUB1 from the ECR1-AXR1 E1 complex and catalyzes its covalent attachment to other proteins. This is NEDD8-conjugating enzyme Ubc12 (RCE1) from Arabidopsis thaliana (Mouse-ear cress).